The following is a 1274-amino-acid chain: DENN domain-containing protein 5B (1274 aa).

At Ser2 the chain carries N-acetylserine. The region spanning 39 to 244 (DELAGENFDQ…EVPLPPPGRS (206 aa)) is the uDENN domain. 2 positions are modified to phosphoserine: Ser49 and Ser178. The cDENN domain occupies 263–399 (ELPLSDYPLR…VDFIQELSEV (137 aa)). The dDENN domain maps to 401 to 581 (LQFGIPPEGS…DNKIMSQWEE (181 aa)). Residues 772–932 (LEENTLIASL…DYFCFTSVFT (161 aa)) enclose the RUN 1 domain. Ser822 carries the phosphoserine modification. A helical membrane pass occupies residues 916-936 (LLSLNAVDYFCFTSVFTTIMI). Positions 936–1044 (IPYRSVIIPI…DDGSLERILI (109 aa)) constitute a PLAT domain. Thr1062 carries the post-translational modification Phosphothreonine. Ser1068, Ser1076, and Ser1079 each carry phosphoserine. An RUN 2 domain is found at 1118–1267 (TVLLCGENGL…QDFTIVLEGS (150 aa)).

The protein belongs to the RAB6IP1 family.

The protein localises to the membrane. Functionally, guanine nucleotide exchange factor (GEF) which may activate RAB39A and/or RAB39B. Promotes the exchange of GDP to GTP, converting inactive GDP-bound Rab proteins into their active GTP-bound form. The sequence is that of DENN domain-containing protein 5B (Dennd5b) from Mus musculus (Mouse).